The sequence spans 123 residues: ATP synthase epsilon chain (123 aa).

The tract at residues 96 to 123 is disordered; that stretch reads ESRKQSAETEHDKAVAESELRAVKRMEA.

The protein belongs to the ATPase epsilon chain family. In terms of assembly, F-type ATPases have 2 components, CF(1) - the catalytic core - and CF(0) - the membrane proton channel. CF(1) has five subunits: alpha(3), beta(3), gamma(1), delta(1), epsilon(1). CF(0) has three main subunits: a, b and c.

It localises to the cell membrane. In terms of biological role, produces ATP from ADP in the presence of a proton gradient across the membrane. The chain is ATP synthase epsilon chain from Corynebacterium jeikeium (strain K411).